A 301-amino-acid polypeptide reads, in one-letter code: Probable 5-dehydro-4-deoxyglucarate dehydratase (301 aa).

It belongs to the DapA family.

It carries out the reaction 5-dehydro-4-deoxy-D-glucarate + H(+) = 2,5-dioxopentanoate + CO2 + H2O. Its pathway is carbohydrate acid metabolism; D-glucarate degradation; 2,5-dioxopentanoate from D-glucarate: step 2/2. This is Probable 5-dehydro-4-deoxyglucarate dehydratase from Cereibacter sphaeroides (strain ATCC 17023 / DSM 158 / JCM 6121 / CCUG 31486 / LMG 2827 / NBRC 12203 / NCIMB 8253 / ATH 2.4.1.) (Rhodobacter sphaeroides).